The following is a 367-amino-acid chain: Protein RIC-3 (367 aa).

Residues 1–31 (MAYSTVQRVALASGLVLAVSLLLPKAFLSRG) form the signal peptide. The interval 30–67 (RGKRPEPPPGPEGKLDRFPPMMHHHSAPSDGQTPGARF) is disordered. Residues 32–95 (KRPEPPPGPE…AGGGGSGRGL (64 aa)) are Lumenal-facing. Residues 96–116 (MGQIIPIYGFGIFLYILYILF) form a helical membrane-spanning segment. At 117-367 (KLSKGKTAED…LRKRNPQGFE (251 aa)) the chain is on the cytoplasmic side. A coiled-coil region spans residues 138 to 169 (HRKITNFELVQLQEKLKETEEAMEKLINRVGP). K201 is modified (N6-acetyllysine; alternate). A Glycyl lysine isopeptide (Lys-Gly) (interchain with G-Cter in ubiquitin); alternate cross-link involves residue K201. Disordered regions lie at residues 262–301 (QMGEIEEEGSERLSWDHLPTDPGAQKDNSVAPCDPKPESC) and 322–367 (ADGY…QGFE). Over residues 271 to 280 (SERLSWDHLP) the composition is skewed to basic and acidic residues. Basic residues predominate over residues 358-367 (LRKRNPQGFE).

Belongs to the ric-3 family. In terms of assembly, monomer and homodimer. Interacts with CHRNA7, CHRNA3, CHRNA4, CHRNB2, CHRNB4 and HTR3A. Expressed in brain, with highest levels in hippocampus, cerebellum and superior colliculus.

It localises to the endoplasmic reticulum membrane. In terms of biological role, molecular chaperone which promotes the proper subunit assembly and surface trafficking of alpha-7 (CHRNA7) nicotinic acetylcholine receptor. Promotes the proper subunit assembly and cell surface expression of alpha-8 (CHRNA8) nicotinic acetylcholine receptor. May also promote functional expression of homomeric serotoninergic 5-HT3 receptors, and of heteromeric acetylcholine receptors alpha-3/beta-2, alpha-3/beta-4, alpha-4/beta-2 and alpha-4/beta-4. The sequence is that of Protein RIC-3 (Ric3) from Mus musculus (Mouse).